The primary structure comprises 405 residues: Probable tRNA sulfurtransferase (405 aa).

Residues 60-165 (AEVDKRLKKV…QDAVYISNQL (106 aa)) form the THUMP domain. Residues 183–184 (ML), 208–209 (HF), Arg-265, Gly-287, and Gln-296 each bind ATP.

The protein belongs to the ThiI family.

It is found in the cytoplasm. It catalyses the reaction [ThiI sulfur-carrier protein]-S-sulfanyl-L-cysteine + a uridine in tRNA + 2 reduced [2Fe-2S]-[ferredoxin] + ATP + H(+) = [ThiI sulfur-carrier protein]-L-cysteine + a 4-thiouridine in tRNA + 2 oxidized [2Fe-2S]-[ferredoxin] + AMP + diphosphate. The catalysed reaction is [ThiS sulfur-carrier protein]-C-terminal Gly-Gly-AMP + S-sulfanyl-L-cysteinyl-[cysteine desulfurase] + AH2 = [ThiS sulfur-carrier protein]-C-terminal-Gly-aminoethanethioate + L-cysteinyl-[cysteine desulfurase] + A + AMP + 2 H(+). The protein operates within cofactor biosynthesis; thiamine diphosphate biosynthesis. Catalyzes the ATP-dependent transfer of a sulfur to tRNA to produce 4-thiouridine in position 8 of tRNAs, which functions as a near-UV photosensor. Also catalyzes the transfer of sulfur to the sulfur carrier protein ThiS, forming ThiS-thiocarboxylate. This is a step in the synthesis of thiazole, in the thiamine biosynthesis pathway. The sulfur is donated as persulfide by IscS. This Lactobacillus helveticus (strain DPC 4571) protein is Probable tRNA sulfurtransferase.